A 596-amino-acid chain; its full sequence is Arginine--tRNA ligase (596 aa).

A 'HIGH' region motif is present at residues 135 to 145 (ANPTGPIHIGG). Residues 227 to 249 (PRVDGGADQDGNPLGEGDSEQRE) form a disordered region.

It belongs to the class-I aminoacyl-tRNA synthetase family. Monomer.

The protein localises to the cytoplasm. The enzyme catalyses tRNA(Arg) + L-arginine + ATP = L-arginyl-tRNA(Arg) + AMP + diphosphate. The polypeptide is Arginine--tRNA ligase (Bifidobacterium adolescentis (strain ATCC 15703 / DSM 20083 / NCTC 11814 / E194a)).